Here is a 207-residue protein sequence, read N- to C-terminus: Thiamine-phosphate synthase (207 aa).

4-amino-2-methyl-5-(diphosphooxymethyl)pyrimidine-binding positions include 37–41 (QLREK) and asparagine 69. The Mg(2+) site is built by aspartate 70 and aspartate 89. A 4-amino-2-methyl-5-(diphosphooxymethyl)pyrimidine-binding site is contributed by serine 108. Residue 134 to 136 (TGS) coordinates 2-[(2R,5Z)-2-carboxy-4-methylthiazol-5(2H)-ylidene]ethyl phosphate. Lysine 137 lines the 4-amino-2-methyl-5-(diphosphooxymethyl)pyrimidine pocket. Residues glycine 165 and 185–186 (IS) contribute to the 2-[(2R,5Z)-2-carboxy-4-methylthiazol-5(2H)-ylidene]ethyl phosphate site.

This sequence belongs to the thiamine-phosphate synthase family. Mg(2+) is required as a cofactor.

The catalysed reaction is 2-[(2R,5Z)-2-carboxy-4-methylthiazol-5(2H)-ylidene]ethyl phosphate + 4-amino-2-methyl-5-(diphosphooxymethyl)pyrimidine + 2 H(+) = thiamine phosphate + CO2 + diphosphate. The enzyme catalyses 2-(2-carboxy-4-methylthiazol-5-yl)ethyl phosphate + 4-amino-2-methyl-5-(diphosphooxymethyl)pyrimidine + 2 H(+) = thiamine phosphate + CO2 + diphosphate. It catalyses the reaction 4-methyl-5-(2-phosphooxyethyl)-thiazole + 4-amino-2-methyl-5-(diphosphooxymethyl)pyrimidine + H(+) = thiamine phosphate + diphosphate. It functions in the pathway cofactor biosynthesis; thiamine diphosphate biosynthesis; thiamine phosphate from 4-amino-2-methyl-5-diphosphomethylpyrimidine and 4-methyl-5-(2-phosphoethyl)-thiazole: step 1/1. In terms of biological role, condenses 4-methyl-5-(beta-hydroxyethyl)thiazole monophosphate (THZ-P) and 2-methyl-4-amino-5-hydroxymethyl pyrimidine pyrophosphate (HMP-PP) to form thiamine monophosphate (TMP). The chain is Thiamine-phosphate synthase from Desulfitobacterium hafniense (strain DSM 10664 / DCB-2).